A 186-amino-acid polypeptide reads, in one-letter code: Putative adenylate kinase (186 aa).

ATP contacts are provided by Gly10, Gly12, Lys13, Thr14, and Ser15. An NMP region spans residues 30–53 (HLNELIKEEHLYTEVDEKRDSVVA). The segment at 108-118 (KRGYSEEKVNE) is LID. Arg109 serves as a coordination point for ATP.

This sequence belongs to the adenylate kinase family. AK6 subfamily. In terms of assembly, interacts with uS11. Not a structural component of 40S pre-ribosomes, but transiently interacts with them by binding to uS11.

It carries out the reaction AMP + ATP = 2 ADP. It catalyses the reaction ATP + H2O = ADP + phosphate + H(+). Broad-specificity nucleoside monophosphate (NMP) kinase that catalyzes the reversible transfer of the terminal phosphate group between nucleoside triphosphates and monophosphates. Also has ATPase activity. Involved in the late maturation steps of the 30S ribosomal particles, specifically 16S rRNA maturation. While NMP activity is not required for ribosome maturation, ATPase activity is. Associates transiently with small ribosomal subunit protein uS11. ATP hydrolysis breaks the interaction with uS11. May temporarily remove uS11 from the ribosome to enable a conformational change of the ribosomal RNA that is needed for the final maturation step of the small ribosomal subunit. In Methanosarcina acetivorans (strain ATCC 35395 / DSM 2834 / JCM 12185 / C2A), this protein is Putative adenylate kinase.